The primary structure comprises 148 residues: uncharacterized protein (148 aa).

Positions 38–99 (QFRRHHHAEH…RRHLRKGHLK (62 aa)) are disordered. Residues 64–82 (FHHDGGRHGHATRIHENNR) show a composition bias toward basic and acidic residues. A compositionally biased stretch (basic residues) spans 83-99 (RPHKRNRRRHLRKGHLK).

This is an uncharacterized protein from Fowl adenovirus A serotype 1 (strain CELO / Phelps) (FAdV-1).